The following is an 828-amino-acid chain: Translation initiation factor IF-2 (828 aa).

Disordered stretches follow at residues 48–76 (SYSG…SEEF) and 112–137 (ASQE…EPKI). The span at 49 to 58 (YSGSTTTLSL) shows a compositional bias: polar residues. Residues 65-74 (LETGSSSGSE) are compositionally biased toward low complexity. Residues 116 to 126 (DPIEVEQEESS) show a composition bias toward acidic residues. Over residues 127 to 137 (DTNKVKEEPKI) the composition is skewed to basic and acidic residues. Residues 326–496 (SRAPVVTVMG…LLIAEMQNLK (171 aa)) form the tr-type G domain. The tract at residues 335-342 (GHVDHGKT) is G1. 335–342 (GHVDHGKT) serves as a coordination point for GTP. Positions 360-364 (GITQH) are G2. Residues 382–385 (DTPG) are G3. Residues 382–386 (DTPGH) and 436–439 (NKID) each bind GTP. The segment at 436–439 (NKID) is G4. The G5 stretch occupies residues 472 to 474 (SAL).

The protein belongs to the TRAFAC class translation factor GTPase superfamily. Classic translation factor GTPase family. IF-2 subfamily.

The protein resides in the cytoplasm. In terms of biological role, one of the essential components for the initiation of protein synthesis. Protects formylmethionyl-tRNA from spontaneous hydrolysis and promotes its binding to the 30S ribosomal subunits. Also involved in the hydrolysis of GTP during the formation of the 70S ribosomal complex. The sequence is that of Translation initiation factor IF-2 from Rickettsia bellii (strain RML369-C).